The primary structure comprises 395 residues: uncharacterized protein (395 aa).

7 helical membrane-spanning segments follow: residues 42-62 (LKYVLVYLLSIINAFLLLIFI), 67-87 (LYSFGISSLTQGFARLVFVLL), 97-117 (LIFNILYWLLYVFINIPLIIF), 128-148 (ILSTHFVVASNVFGFLISIIP), 196-216 (FIYAAIYGFYNGISVSLLYIL), 241-261 (ILFYVNSFILIIAILIGSFVA), and 281-301 (LFFSPNLIATFFSILLTGTVV).

It localises to the cell membrane. This is an uncharacterized protein from Mycoplasma genitalium (strain ATCC 33530 / DSM 19775 / NCTC 10195 / G37) (Mycoplasmoides genitalium).